The sequence spans 344 residues: Lipase chaperone (344 aa).

A helical membrane pass occupies residues 14–34; sequence AMVYGVVGLAAIAGVAMWSGA.

It belongs to the lipase chaperone family.

The protein resides in the cell inner membrane. May be involved in the folding of the extracellular lipase during its passage through the periplasm. The protein is Lipase chaperone of Burkholderia lata (strain ATCC 17760 / DSM 23089 / LMG 22485 / NCIMB 9086 / R18194 / 383).